The primary structure comprises 450 residues: Chromosomal replication initiator protein DnaA (450 aa).

The segment at 1–71 is domain I, interacts with DnaA modulators; sequence MEDVWLQAQS…SVRSLTDSHF (71 aa). A domain II region spans residues 71–113; that stretch reads FQVELQVAARQQEKTAKSPRKSHTEDELGPVESEKCAPAEFST. The tract at residues 82 to 103 is disordered; it reads QEKTAKSPRKSHTEDELGPVES. The interval 114-330 is domain III, AAA+ region; it reads NLNAKYTFDT…GMLIRLGAVA (217 aa). ATP is bound by residues G158, G160, K161, and T162. The tract at residues 331–450 is domain IV, binds dsDNA; that stretch reads SLTGKNITLD…IETLRKGLLN (120 aa).

Belongs to the DnaA family. As to quaternary structure, oligomerizes as a right-handed, spiral filament on DNA at oriC.

It localises to the cytoplasm. Functionally, plays an essential role in the initiation and regulation of chromosomal replication. ATP-DnaA binds to the origin of replication (oriC) to initiate formation of the DNA replication initiation complex once per cell cycle. Binds the DnaA box (a 9 base pair repeat at the origin) and separates the double-stranded (ds)DNA. Forms a right-handed helical filament on oriC DNA; dsDNA binds to the exterior of the filament while single-stranded (ss)DNA is stabiized in the filament's interior. The ATP-DnaA-oriC complex binds and stabilizes one strand of the AT-rich DNA unwinding element (DUE), permitting loading of DNA polymerase. After initiation quickly degrades to an ADP-DnaA complex that is not apt for DNA replication. Binds acidic phospholipids. The polypeptide is Chromosomal replication initiator protein DnaA (Geobacter metallireducens (strain ATCC 53774 / DSM 7210 / GS-15)).